Here is a 209-residue protein sequence, read N- to C-terminus: Rac-like GTP-binding protein ARAC9 (209 aa).

25-32 (GDGAVGKT) serves as a coordination point for GTP. An Effector region motif is present at residues 47-55 (YVPTVFDNF). Residues 72–76 (DTAGQ) and 130–133 (TKSD) each bind GTP. Cysteine methyl ester is present on Cys-206. Cys-206 carries the S-geranylgeranyl cysteine lipid modification. Residues 207–209 (HVL) constitute a propeptide, removed in mature form.

The protein belongs to the small GTPase superfamily. Rho family. In terms of assembly, interacts with SPK1.

The protein resides in the cytoplasm. It is found in the membrane. Functionally, inactive GDP-bound Rho GTPases reside in the cytosol, are found in a complex with Rho GDP-dissociation inhibitors (Rho GDIs), and are released from the GDI protein in order to translocate to membranes upon activation. The sequence is that of Rac-like GTP-binding protein ARAC9 (ARAC9) from Arabidopsis thaliana (Mouse-ear cress).